The sequence spans 153 residues: 3-hydroxyacyl-[acyl-carrier-protein] dehydratase FabZ (153 aa).

Residue histidine 54 is part of the active site.

Belongs to the thioester dehydratase family. FabZ subfamily.

It is found in the cytoplasm. The enzyme catalyses a (3R)-hydroxyacyl-[ACP] = a (2E)-enoyl-[ACP] + H2O. Its function is as follows. Involved in unsaturated fatty acids biosynthesis. Catalyzes the dehydration of short chain beta-hydroxyacyl-ACPs and long chain saturated and unsaturated beta-hydroxyacyl-ACPs. This chain is 3-hydroxyacyl-[acyl-carrier-protein] dehydratase FabZ, found in Shewanella sediminis (strain HAW-EB3).